Reading from the N-terminus, the 85-residue chain is Small ribosomal subunit protein uS17 (85 aa).

The protein belongs to the universal ribosomal protein uS17 family. Part of the 30S ribosomal subunit.

One of the primary rRNA binding proteins, it binds specifically to the 5'-end of 16S ribosomal RNA. This Ruminiclostridium cellulolyticum (strain ATCC 35319 / DSM 5812 / JCM 6584 / H10) (Clostridium cellulolyticum) protein is Small ribosomal subunit protein uS17.